The following is a 3674-amino-acid chain: Spectrin beta chain, non-erythrocytic 5 (3674 aa).

The segment at 1 to 37 is disordered; the sequence is MAGQPHSPRELLGAAGHRSRRPSTELRVPPSPSLTMD. The actin-binding stretch occupies residues 1–279; that stretch reads MAGQPHSPRE…IMTYVSLYYH (279 aa). Calponin-homology (CH) domains follow at residues 54-159 and 177-282; these read QMQE…LRFQ and LSTK…HYCS. 8 Spectrin repeats span residues 307–416, 428–529, 642–742, 747–810, 900–996, 1103–1206, 1209–1311, and 1315–1417; these read LQTQ…ALQQ, ARRF…RKQV, AEFL…ARLQ, VLQY…QGRA, GFCS…AVQL, ARQS…WLQE, ELQK…RQLL, and QLQE…ELQQ. Positions 1441-1469 are disordered; the sequence is ALQSSETGQDLRSSQRLQKRHQQLESESR. Polar residues predominate over residues 1442–1456; that stretch reads LQSSETGQDLRSSQR. Spectrin repeat units lie at residues 1521–1624, 1628–1727, 1731–1835, 1842–1940, 1944–2046, 2052–2146, 2150–2253, 2256–2361, 2366–2467, 2471–2574, 2577–2680, 2683–2784, 2791–2890, 2894–2997, 3000–3103, 3106–3209, 3213–3311, 3318–3415, and 3422–3488; these read ELHQ…CLQQ, FQQY…RELE, RLHE…ALRD, VHRD…AQLE, LLAR…ERLQ, QLFL…HALH, LMAS…ELED, NFLE…QQLE, IHVL…EALD, QAQK…QLQQ, ELQL…RLEE, QLQA…AKLQ, RLRR…TALE, LLLK…LLQQ, EAQQ…GLQE, QLHQ…ENLA, EVHS…QWLA, AFLG…RWQR, and LQKL…EQEL. Residues 3533-3641 form the PH domain; it reads TPTMEGSLEF…WWRALGSTAA (109 aa).

Belongs to the spectrin family. In terms of assembly, probably associates with an alpha chain. Interacts (via C-terminus) with TRPC4. In terms of tissue distribution, expressed at very low levels in many tissues, with strongest expression in cerebellum, spinal cord, stomach, pituitary gland, liver, pancreas, salivary gland, kidney, bladder, and heart.

Its subcellular location is the cytoplasm. The protein resides in the cytoskeleton. This is Spectrin beta chain, non-erythrocytic 5 (SPTBN5) from Homo sapiens (Human).